The sequence spans 866 residues: Ribosome biogenesis protein BOP1 homolog (866 aa).

2 disordered regions span residues 1–180 and 214–241; these read MVAN…EETR and PPEAKSRFKGGKNQDEYAAGDTSDEEDI. 3 stretches are compositionally biased toward acidic residues: residues 37-52, 60-146, and 167-179; these read VDDESASDYYESDEEN, GNDE…LEEP, and TAEDEDEEDDEET. WD repeat units follow at residues 527 to 566, 568 to 608, 697 to 735, 738 to 777, 781 to 820, and 836 to 866; these read GHTDMIRSVSIEPKGEYLVTGSDDQTVKIWEVSTARCIRT, PTGD…SLLV, KSKGLIQCVLFHPVKPCLFVATQRHVRVYDLVKQELLKK, PSCKWISSMAIHPKGDNLLVATYEKKMMWFDLDLSTRPYQ, LHHSAIRNVAFHLRYPLFASASDDRSVIVSHGMVYNDLLQ, and VNDFGAFDVVFHPTQPWLFSSGADNTVRLYT.

This sequence belongs to the WD repeat BOP1/ERB1 family.

It is found in the nucleus. The protein resides in the nucleolus. It localises to the nucleoplasm. Functionally, required for maturation of ribosomal RNAs and formation of the large ribosomal subunit. The sequence is that of Ribosome biogenesis protein BOP1 homolog from Aedes aegypti (Yellowfever mosquito).